The following is a 61-amino-acid chain: MPFVKIDLFEGRSQEQKIQLAREVTEVVSRVAKAPKEAIHVFINDMPEGTYYPHGEMKKKG.

The active-site Proton acceptor; via imino nitrogen is P2.

The protein belongs to the 4-oxalocrotonate tautomerase family.

The protein is Probable tautomerase SMU_1087 of Streptococcus mutans serotype c (strain ATCC 700610 / UA159).